We begin with the raw amino-acid sequence, 452 residues long: Cell division protein FtsZ (452 aa).

Residues 24–28, 111–113, Glu-142, Arg-146, and Asp-190 each bind GTP; these read GAGSN and GTG.

It belongs to the FtsZ family. Homodimer. Polymerizes to form a dynamic ring structure in a strictly GTP-dependent manner. Interacts directly with several other division proteins.

It is found in the cytoplasm. Functionally, essential cell division protein that forms a contractile ring structure (Z ring) at the future cell division site. The regulation of the ring assembly controls the timing and the location of cell division. One of the functions of the FtsZ ring is to recruit other cell division proteins to the septum to produce a new cell wall between the dividing cells. Binds GTP and shows GTPase activity. The chain is Cell division protein FtsZ from Rickettsia typhi (strain ATCC VR-144 / Wilmington).